Here is a 449-residue protein sequence, read N- to C-terminus: Adenylosuccinate synthetase (449 aa).

GTP-binding positions include 12–18 (GDEGKGK) and 40–42 (GHT). The Proton acceptor role is filled by aspartate 13. Aspartate 13 and glycine 40 together coordinate Mg(2+). Residues 13-16 (DEGK), 38-41 (NAGH), threonine 128, arginine 142, glutamine 223, threonine 238, and arginine 302 each bind IMP. Histidine 41 serves as the catalytic Proton donor. 298–304 (TTTGRRR) contributes to the substrate binding site. Residues arginine 304, 330–332 (KLD), and 412–414 (SLG) contribute to the GTP site.

Belongs to the adenylosuccinate synthetase family. Homodimer. It depends on Mg(2+) as a cofactor.

It localises to the cytoplasm. It carries out the reaction IMP + L-aspartate + GTP = N(6)-(1,2-dicarboxyethyl)-AMP + GDP + phosphate + 2 H(+). Its pathway is purine metabolism; AMP biosynthesis via de novo pathway; AMP from IMP: step 1/2. Functionally, plays an important role in the de novo pathway of purine nucleotide biosynthesis. Catalyzes the first committed step in the biosynthesis of AMP from IMP. The polypeptide is Adenylosuccinate synthetase (Gloeothece citriformis (strain PCC 7424) (Cyanothece sp. (strain PCC 7424))).